Consider the following 229-residue polypeptide: UPF0758 protein Mbur_0382 (229 aa).

One can recognise an MPN domain in the interval 106 to 228 (KIRSANDVYS…YVSLKEEGYI (123 aa)). 3 residues coordinate Zn(2+): His-177, His-179, and Asp-190. Residues 177–190 (HNHPSGDPAPSRED) carry the JAMM motif motif.

Belongs to the UPF0758 family.

The chain is UPF0758 protein Mbur_0382 from Methanococcoides burtonii (strain DSM 6242 / NBRC 107633 / OCM 468 / ACE-M).